The sequence spans 472 residues: 3-isopropylmalate dehydratase large subunit (472 aa).

The tract at residues 61-80 (TPDHNVPTTQKERASGVEGI) is disordered. Positions 353, 414, and 417 each coordinate [4Fe-4S] cluster.

It belongs to the aconitase/IPM isomerase family. LeuC type 1 subfamily. Heterodimer of LeuC and LeuD. It depends on [4Fe-4S] cluster as a cofactor.

It catalyses the reaction (2R,3S)-3-isopropylmalate = (2S)-2-isopropylmalate. It participates in amino-acid biosynthesis; L-leucine biosynthesis; L-leucine from 3-methyl-2-oxobutanoate: step 2/4. Functionally, catalyzes the isomerization between 2-isopropylmalate and 3-isopropylmalate, via the formation of 2-isopropylmaleate. The polypeptide is 3-isopropylmalate dehydratase large subunit (Saccharophagus degradans (strain 2-40 / ATCC 43961 / DSM 17024)).